A 190-amino-acid polypeptide reads, in one-letter code: Protein A52 (190 aa).

Belongs to the orthopoxvirus A52R protein family. As to quaternary structure, interacts with host TRAF6 and IRAK2.

In terms of biological role, bcl-2-like protein which targets host toll-like receptor signaling complexes to suppress innate immune response. Interacts with host TRAF6 to activate p38 and subsequently induce the expression of several cytokines such as IL-10. Also associates with host IRAK2 to inhibit NF-kappa-B signaling. This Homo sapiens (Human) protein is Protein A52.